A 796-amino-acid chain; its full sequence is ER degradation-enhancing alpha-mannosidase-like protein 1 (796 aa).

A signal peptide spans 1–20 (MVCCLWVLLALLLHLDHVAC). Asparagine 86 carries N-linked (GlcNAc...) asparagine glycosylation. The Proton donor role is filled by glutamate 372. Threonine 495 serves as a coordination point for Ca(2+). Asparagine 517, asparagine 672, and asparagine 762 each carry an N-linked (GlcNAc...) asparagine glycan.

This sequence belongs to the glycosyl hydrolase 47 family. As to quaternary structure, interacts with PDI1. It depends on Ca(2+) as a cofactor.

It is found in the endoplasmic reticulum lumen. It catalyses the reaction Hydrolysis of terminal, non-reducing alpha-D-mannose residues in alpha-D-mannosides.. The protein operates within protein modification; protein glycosylation. Functionally, alpha-1,2-specific exomannosidase involved in endoplasmic reticulum-associated degradation (ERAD). Delivers misfolded glycoproteins to proteasomes. Forms a complex with PDI1 to process unfolded protein-bound Man8GlcNAc2 oligosaccharides to Man7GlcNAc2, promoting degradation in unfolded protein response. This chain is ER degradation-enhancing alpha-mannosidase-like protein 1 (MNL1), found in Saccharomyces cerevisiae (strain ATCC 204508 / S288c) (Baker's yeast).